The sequence spans 55 residues: Cicadin (55 aa).

Residues 1-26 (NEYHGFVDKANNENKRKKQQGRDDFV) are compositionally biased toward basic and acidic residues. Positions 1-39 (NEYHGFVDKANNENKRKKQQGRDDFVVKPNNFANRRRKD) are disordered.

In terms of biological role, possesses antifungal activity against B.cinerea, M.arachidicola, F.oxysporum, R.solani and C.comatus. Suppresses the activity of HIV-1 reverse transcriptase and stimulates the proliferation of murine splenocytes. The polypeptide is Cicadin (Cicada flammata).